A 2731-amino-acid polypeptide reads, in one-letter code: Teneurin-1 (2731 aa).

A disordered region spans residues 1-72 (MEQTDCKPYQ…KRKDVEKSTQ (72 aa)). The Teneurin N-terminal domain maps to 1–318 (MEQTDCKPYQ…KPYRCCNWKC (318 aa)). At 1–324 (MEQTDCKPYQ…NWKCTALSAT (324 aa)) the chain is on the cytoplasmic side. Residues 44 to 55 (ETLHEYNQELRR) show a composition bias toward basic and acidic residues. The Nuclear localization signal (NLS) motif lies at 62–65 (RKRK). The residue at position 105 (serine 105) is a Phosphoserine. Residue threonine 109 is modified to Phosphothreonine. Position 116 is a phosphoserine (serine 116). The disordered stretch occupies residues 175–241 (DSAQDMQSSP…PAPPTSTQDS (67 aa)). Positions 178 to 189 (QDMQSSPHNQFT) are enriched in polar residues. Over residues 192–201 (PLPPPPPPPH) the composition is skewed to pro residues. Residues 214-224 (DSLQRRSMTTR) are compositionally biased toward polar residues. The Required for interaction with SORBS1 (Ten-1 ICD form) motif lies at 290-297 (PPPRPLPR). A helical membrane pass occupies residues 325-345 (AITVTLALLLAYVIAVHLFGL). Residues 346–2731 (TWQLQPVGQI…FMRQSEIGRR (2386 aa)) lie on the Extracellular side of the membrane. An N-linked (GlcNAc...) asparagine glycan is attached at asparagine 432. EGF-like domains are found at residues 527–558 (IMDDCSTNCNGNGECISGHCHCFPGFLGPDCA), 559–590 (RDSCPVLCGGNGEYEKGHCVCRNGWKGPECDV), 591–623 (PEEQCIDPTCFGHGTCIMGVCICVPGYKGEICE), 624–656 (EEDCLDPMCSSHGICVKGECHCSTGWGGVNCET), 657–690 (PLPICQEQCSGHGTFLLDTGVCSCDPKWTGSDCS), 691–720 (TELCTMECGSHGVCSRGICQCEEGWVGPTC), 721–752 (EERSCHSHCAEHGQCKDGKCECSPGWEGDHCT), and 760–795 (VRDGCPGLCFGNGRCTLDQNGWHCVCQVGWSGTGCN). 22 disulfides stabilise this stretch: cysteine 531–cysteine 541, cysteine 535–cysteine 546, cysteine 548–cysteine 557, cysteine 566–cysteine 577, cysteine 579–cysteine 588, cysteine 595–cysteine 606, cysteine 600–cysteine 611, cysteine 613–cysteine 622, cysteine 627–cysteine 638, cysteine 632–cysteine 643, cysteine 645–cysteine 654, cysteine 665–cysteine 678, cysteine 680–cysteine 689, cysteine 694–cysteine 704, cysteine 698–cysteine 709, cysteine 711–cysteine 720, cysteine 725–cysteine 735, cysteine 729–cysteine 740, cysteine 742–cysteine 751, cysteine 764–cysteine 774, cysteine 768–cysteine 783, and cysteine 785–cysteine 794. Residues asparagine 904 and asparagine 1083 are each glycosylated (N-linked (GlcNAc...) asparagine). NHL repeat units lie at residues 1193-1218 (LFAPVALASGPDGSVYVGDFNFVRRI), 1298-1342 (SHCG…NAVI), 1357-1408 (LSCD…IAGR), 1420-1464 (FLVS…VTTN), and 1487-1530 (CFSG…ISKN). Residues 1540-1559 (YEIASPADQELYQFTVNGTH) form a YD 1 repeat. N-linked (GlcNAc...) asparagine glycans are attached at residues asparagine 1556 and asparagine 1573. YD repeat units lie at residues 1576–1596 (YNAEGDLGAITSSNGNSVHIR), 1614–1638 (YWLTISSNGVLKRVSAQGYNLALMT), 1639–1660 (YPGNTGLLATKSNENGWTTVYE), and 1661–1681 (YDPEGHLTNATFPTGEVSSFH). N-linked (GlcNAc...) asparagine glycosylation is found at asparagine 1669, asparagine 1705, asparagine 1743, asparagine 1763, asparagine 1787, and asparagine 1848. 11 YD repeats span residues 1851-1870 (YSPSGLVTFIQRGTWNEKME), 1871-1891 (YDQSGKIISRTWADGKIWSYT), 1892-1910 (YLEKSVMLLLHSQRRYIFE), 1911-1931 (YDQSDCLLSVTMPSMVRHSLQ), 1939-1955 (YRNIYTPPDSSTSFIQD), 1956-1975 (YSRDGRLLQTLHLGTGRRVL), 1976-1995 (YKYTKQARLSEILYDTTQVT), 1998-2018 (YEESSGVIKTIHLMHDGFICT), 2021-2041 (YRQTGPLIGRQIFRFSEEGLV), 2091-2111 (YDLNQVITTTVMKHTKIFNAN), and 2119-2139 (YEILKAIAYWMTIQYDNMGRM). Residue asparagine 2151 is glycosylated (N-linked (GlcNAc...) asparagine). YD repeat units lie at residues 2159-2179 (YDADGQLQTVSVNDKIQWRYS), 2180-2200 (YDLNGNINLLSHGNSARLTPL), 2202-2222 (YDLRDRITRLGEIQYKMDEDG), 2234-2254 (YNSNGLLQKAYNKVSGWTVQY), and 2256-2276 (YDGLGRRVASKSSLGQHLQFF). Residue asparagine 2291 is glycosylated (N-linked (GlcNAc...) asparagine). YD repeat units lie at residues 2302-2319 (YDLQGHLIAMELSSGEEY) and 2320-2343 (YVACDNMGTPLAVFSSRGQVIKEI). Serine 2586 is subject to Phosphoserine. Asparagine 2608 is a glycosylation site (N-linked (GlcNAc...) asparagine).

Belongs to the tenascin family. Teneurin subfamily. Homodimer; disulfide-linked. Heterodimer with either TENM2 or TENM3. May also form heterodimer with TENM4. Ten-1 ICD interacts with SORBS1 (via third SH3 domain). Interacts with MBD1 isoform 2. Ten-1 ICD interacts with HINT1. In terms of processing, once secreted, may also be cleaved to give rise to the TCAP-1 form. Derives from the plasma membrane form by proteolytic processing. Further proteolytic cleavage may generate 11.9 and 4.7 kDa bioactive peptides. Isoform 1 and isoform 2 are expressed in the brain. Isoform 2 is expressed in the granular layer of the dentate gyrus and the pyramidal layer (Py) of the CA1, CA2 and CA3 of the hippocampus (at protein level). Expressed in the cortex, thalamus, CA1, CA2, CA3, dentate gyrus and granular layer of the hippocampus. Weakly expressed in kidney, testis and lung.

The protein localises to the cell membrane. The protein resides in the cytoplasm. It localises to the secreted. Its subcellular location is the nucleus. It is found in the nucleus speckle. The protein localises to the nucleus matrix. The protein resides in the cytoskeleton. Functionally, involved in neural development, regulating the establishment of proper connectivity within the nervous system. May function as a cellular signal transducer. Its function is as follows. Plays a role in the regulation of neuroplasticity in the limbic system. Mediates a rapid reorganization of actin- and tubulin-based cytoskeleton elements with an increase in dendritic arborization and spine density formation of neurons in the hippocampus and amygdala. Induces BDNF transcription inhibition in neurons. Activates the mitogen-activated protein (MAP) kinase 2 (MEK2) and extracellular signal-regulated kinase (ERK) cascade. Also acts as a bioactive neuroprotective peptide on limbic neurons of the brain and regulates stress-induced behavior: attenuates alkalosis-associated necrotic cell death and the effects of corticotropin-releasing factor (CRF) on c-fos/FOS induction and on the reinstatement of cocaine seeking. Induces gene transcription activation. The protein is Teneurin-1 (Tenm1) of Mus musculus (Mouse).